We begin with the raw amino-acid sequence, 954 residues long: MSTTSLQHFPHSYSPFSSSRSLNRMAQSQTSGLDTLAEGSQYALEQLQMSREAAGSGEATDSVGKPKDQFQVDNDNHHNNHSLSNFKNPSQRDPLVEARSTIRKNSASAPVRRRISRACDQCNQLRTKCDGQNPCAHCIDFGLTCEYARERKKRGKASKKDLAAAAAAAAAAATNSGQPNGSSGKEDAALVGGHTSPDRRPTINGRYDPAFEVPRNLNGSAQHSEASGMVGMQNSQHLPPHSQSSMGGGLEGLPLNGYNGLNDSGRPSMPVPELQSLHMLHNSHTNPRSPSSILPHHRYNGGYNDSAYSLMNPQEPNSTSISHFRLGSSTENPPNSFLGLSPPAQSPGWLPLPSPSPANFPSFSMASFSTTLRYPVLHPVLPHIASIIPQSLACDLLDVYFTSSSSSHLSPQSPYVVGYIFRKQSFLHPTKPRVCTPGLLASMLWVAAQTSDAPFLTSPPSARGRVCQKLLELTIGLLRPLIHGPAPGETSPNYAANMVINGVALGGFGVSMDQLGAQSSATGAVDDVATYVHLATVISASEYKAASMRWWTAAWSLARELKLGRELPPNTPHARPDAERDGDPDADLSKRHPPPLITSMGHGPGNTIINITEEEREERRRLWWLLYATDRHLALCYNRPLTLLDKECEGLLQPMNDDLWQAGDFATYRQAGPPVECTGHSMFGYFLPLMTILGEIVDLQQARNHPRFGLAFRNSAECEAQVLEIARQLDVYAQSLKEFETRYTSSLALGAAETEAAMDGSHPNHVSPSGRSSSTVESRVNESIVHTKMVVAYGTHIMHVLHILLAGKWDPINLLDDNDLWISSESFVAAMGHAVGAAEAAAEILEYDPDLSFMPFFFGIYLLQGSFLLLLTADKLQGDASPSVVRACETIVRAHEACVVTLNTEYQRTFRKVMRSALAQVRGRLPEDFGEQQQRRREVLALYRWTGDGSGLAL.

2 disordered regions span residues 1–39 (MSTTSLQHFPHSYSPFSSSRSLNRMAQSQTSGLDTLAEG) and 51–93 (REAA…SQRD). The segment covering 8–21 (HFPHSYSPFSSSRS) has biased composition (low complexity). Positions 22–33 (LNRMAQSQTSGL) are enriched in polar residues. Positions 64 to 78 (GKPKDQFQVDNDNHH) are enriched in basic and acidic residues. The segment covering 82–91 (SLSNFKNPSQ) has biased composition (polar residues). The segment at residues 119–145 (CDQCNQLRTKCDGQNPCAHCIDFGLTC) is a DNA-binding region (zn(2)-C6 fungal-type). Disordered regions lie at residues 173-226 (ATNS…HSEA), 310-333 (LMNPQEPNSTSISHFRLGSSTENP), 566-607 (ELPP…PGNT), and 758-777 (MDGSHPNHVSPSGRSSSTVE). Polar residues predominate over residues 174-183 (TNSGQPNGSS). The segment covering 574-590 (ARPDAERDGDPDADLSK) has biased composition (basic and acidic residues). Residues 764–777 (NHVSPSGRSSSTVE) show a composition bias toward polar residues.

This sequence belongs to the xlnR/xlr1 family.

Its subcellular location is the nucleus. Its function is as follows. Transcriptional activator of the xylanolytic system. Involved in the regulation of extracellular cellulolytic and xylanolytic genes and in the regulation of the intracellular activities of D-xylose catabolic genes in the pentose catabolic pathway (PCP) in response to the presence of D-xylose. This is Xylanolytic transcriptional activator xlnR (xlnR) from Aspergillus fumigatus (strain ATCC MYA-4609 / CBS 101355 / FGSC A1100 / Af293) (Neosartorya fumigata).